Reading from the N-terminus, the 434-residue chain is Polyadenylate-binding protein RBP47C' (434 aa).

The interval 1–50 is disordered; sequence MADVKVQSESESSDSHPLVDYQSLPPYPPPHPPVEVEENQPKTSPTPPPP. RRM domains follow at residues 103–185, 199–278, and 306–378; these read KTIW…WASF, LSIF…PATP, and TTIF…WGRN.

Belongs to the polyadenylate-binding RBP47 family. Interacts with the poly(A) tail of mRNA in nucleus.

The protein localises to the nucleus. It localises to the cytoplasmic granule. Heterogeneous nuclear ribonucleoprotein (hnRNP)-protein binding the poly(A) tail of mRNA and probably involved in some steps of pre-mRNA maturation. The protein is Polyadenylate-binding protein RBP47C' (RBP47C') of Arabidopsis thaliana (Mouse-ear cress).